Consider the following 1468-residue polypeptide: ERQLRKENGKQKNELMAMEAEVGEKIGRLQRFKEMAVFKIAALQKVVDNSVSLSELELANRQYNELTAKYRDILQKDNMLVQRTNNLEHLECENVSLKEQMESINKELEITKEKLHTIEQAWEQETKLGNESNMDKAKKSVTNSEIVSISKKITMLEMKELNERQRAEHSQKMYEHVKTSLQQVEERNFELETKFAELTRINLEAQKVEQMLRDELADSVSKTVSDADRQHILELEKSEMELKVEVSKLKEISDIAKRQVEILNAQQQSREKEVESLRTQLLDYQAQSDEKALIAKLHQHVVSLQASEAAALGKVESVASKLQKVEAHTLRLEQKLDEKEQALFYARLEGRNRAKHLRQTIQSLRRQFSGALPLAQQEKFSKTMIQLQNDKLKIMEEMKNSQQEHRSLKNKTLEMELKLKGLEDLISTLKDARGAQKVISWHTKIEELRLQELKLNRELVKDKEEIKYLNNIISEYENTISSLEEEIVQQNKFHEERQMAWDQREVELERQLDVFDRQQSEILREAQKFEEATGSMPDPSLPIPNQLEIALRKIKENIRIILETQATCRSLEEKLREKESALRLAEENILSRDKVINELRLRLPATAEQEKLLAEFSRKEVEPKSHHTLKLAHQTIANMQARLNQKEEVLKKYQHLLEKAREEQREIVKKHEEELHTLHRKLELQADNSLSKFKETAWDLIKQSPTPVPTNKHFIRLAEMEQTVAEQDDSLSSLVIKLKQVSQDLERQKEITELKIKEFENMKLRLQENHADEVKKIKAEVEDLRCLLVQSQKESQSLKSELQTQKEANSRAPTTTMRNLVERLKSQLALKEKQQKALSRALLELRAEMTAAAEERIISMTSQKEANLNVQQIVDRHTKELKSQIEDLNENILKLKEALKTSKNRENTLTDNLNDLTNELQNKQKAYGKVLREKDAVDQENNELKRQIKRLTSGLQGKPLIDNKQSLIEELQKKIKKLESQLERKVDEAEMKPMKEKSAREEVIRWEEGKKWQTKIEGIRNKLKEKEGEVYILTKQLTTLKDLFAKADKEKLTLQRKLKTTGLTVDQVMAARVLESEKELEELKKRNLDLENDISYMRSHQALPRDSVIEDLHLQNKYLQEKLHALEKQLSKDAYSRPSTSGIDSDDHYQREQELQRENLKLSSENIELKFQLEQANKDLPRLKNQVRDLKEMCEFLKKEKAEVERKLGRVRGSGRSGKTIPELEKTIGLMKKVVEKVQRENEQLKKASGILTSEKMANIEMENEKLKAELEKLKVHLGRQLSMHYESKAKGTEKIVAENERLRKELKKIEILKHVPEGDETEQGLQRELRVLRLANSQLEKEKEELIHRIEISKDQNGPDSTISDPDHLMEKIKDLETQLRTSDMEKQHLKEEIQKLKKELENFDPSFFEEIEDLKYNYKEEVKKNILLEEKLKKLSEQFGVELTSPVAASEQFEDEQENPVNFPIY.

7 coiled-coil regions span residues 1–25, 52–121, 172–292, 318–528, 559–592, 627–688, and 736–1441; these read ERQLRKENGKQKNELMAMEAEVGEK, SLSE…IEQA, KMYE…DEKA, VASK…EAQK, RIILETQATCRSLEEKLREKESALRLAEENILSR, HTLK…QADN, and IKLK…SEQF. Positions 1060-1468 are self-association (with itself or N-terminus); the sequence is TTGLTVDQVM…QENPVNFPIY (409 aa). Positions 1130–1152 are disordered; sequence LSKDAYSRPSTSGIDSDDHYQRE.

Part of the tectonic-like complex (also named B9 complex). Interacts with ATF4 via its N-terminal region. Associates with the BBSome complex, interacting (via N-terminus) with BBS4. Interacts with IQCB1/NPHP5; IQCB1 and CEP290/NPHP6 are proposed to form a functional NPHP5-6 module localized to the centrosome. Interacts with NPHP4; the interaction likely requires additional interactors. Interacts with ZNF423, FAM161A, CEP162, CEP162, CEP131, TALPID3, CCDC13, CC2D2A, RPGRIP1. Can self-associate (homo- or heteromeric). Interacts with CCP110; required for suppressing cilia formation. Interacts with RPGR. Associates (via C-terminus) with microtubules; association to microtubule is reduced in response to cellular stress, such as ultraviolet light (UV) radiation or heat shock, in a process that requires p38 MAP kinase signaling. Interacts with FAM161A. Interacts with PCM1. Interacts with CCDC66. Interacts with ARMC9 and CSPP1. Ubiquitinated. May undergo monoubiquitination; monoubiquitination is inhibited in response to cellular stress, such as ultraviolet light (UV) radiation or heat shock, but does not cause its displacement from centriolar satellites.

Its subcellular location is the cytoplasm. It localises to the cytoskeleton. The protein localises to the microtubule organizing center. The protein resides in the centrosome. It is found in the centriolar satellite. Its subcellular location is the nucleus. It localises to the cell projection. The protein localises to the cilium. The protein resides in the cilium basal body. It is found in the centriole. Its subcellular location is the cytoplasmic vesicle. Its function is as follows. Involved in early and late steps in cilia formation. Its association with CCP110 is required for inhibition of primary cilia formation by CCP110. May play a role in early ciliogenesis in the disappearance of centriolar satellites and in the transition of primary ciliar vesicles (PCVs) to capped ciliary vesicles (CCVs). Required for the centrosomal recruitment of RAB8A and for the targeting of centriole satellite proteins to centrosomes such as of PCM1. Required for the correct localization of ciliary and phototransduction proteins in retinal photoreceptor cells; may play a role in ciliary transport processes. Required for efficient recruitment of RAB8A to primary cilium. In the ciliary transition zone is part of the tectonic-like complex which is required for tissue-specific ciliogenesis and may regulate ciliary membrane composition. Involved in regulation of the BBSome complex integrity, specifically for presence of BBS2, BBS5 and BBS8/TTC8 in the complex, and in ciliary targeting of selected BBSome cargos. May play a role in controlling entry of the BBSome complex to cilia possibly implicating IQCB1/NPHP5. Activates ATF4-mediated transcription. The protein is Centrosomal protein of 290 kDa (CEP290) of Bos taurus (Bovine).